The following is a 150-amino-acid chain: Large ribosomal subunit protein uL13 (150 aa).

Positions 127–150 are disordered; it reads KGTEHPHSAQKPQPLQLNPSATAK. The segment covering 136-150 has biased composition (polar residues); that stretch reads QKPQPLQLNPSATAK.

Belongs to the universal ribosomal protein uL13 family. In terms of assembly, part of the 50S ribosomal subunit.

In terms of biological role, this protein is one of the early assembly proteins of the 50S ribosomal subunit, although it is not seen to bind rRNA by itself. It is important during the early stages of 50S assembly. This is Large ribosomal subunit protein uL13 from Synechococcus sp. (strain CC9902).